We begin with the raw amino-acid sequence, 794 residues long: MASEDGEMPSQFEGIDPEQLTESQMQQYMMEMQRQGLLDSNMEGGQYEEGYEEGQEGEGYGEEYGDQDYDGNQNEYDSQQDSQQQGHDQVNEMHQDRYDRRVNSEISGNYEADDETLRKIRRDLLDNINLERRHRDLQPVYIDLTTNNISQYYSEYLVNNEHNQDFYENAKVRYNNLGECELCHITAKFEPDADITKEYIYDYFMEIGYLFLESEEEKRIILNPANNHIGIGVFFDEIQIVVVLILSEKVLCIQKISQPEQNKIEIRGKMLDENFGIYAIRIMNVDDQKKDIKGVGPEFIEYTRSTQEWMASFELELYNQDRMAIEYYTRVSPDSIPYKKKQSKNEKLTYKHLQLRLRTPFQIYPDPKYAAEDEKERIRKEQEILAHEEQERKEREENDAKRLKQSRKDYGDGQYDDDEHGQDDFNSQSDISDKDKHHDSMHAEQEQNQQAAQQQQDTISNKEIRQELEMAITEAQRQHDEFMLQNHKLQEEIKLLKNKNDGFVDRSNETAMNEHKYLNTLAHVHQIRLDLKQTQTRYNQMSQELQKKLEQKQKKCNEIKYAFLELKREVAKKAANSRTDKPIPEQQINEWEKAELQKSKELQELRLQILRLRNAYVKNQKILKKKEELAEGLHLIDFEQLKIENQTLNEKIEERNEELHKLKKKNTTTIQILTHTREKLGFVQGENGELNSQNVRKDQELDDMRKQLTQQKKTKDKLRSVNLTLKQQTGIVNSEELGQDYRDLRTRVSKLEEEKKRLEQKLRSMHEAIKTANQISTQNMQSQNNSLKKPYQPY.

2 disordered regions span residues 1–105 (MASE…VNSE) and 386–458 (AHEE…QQDT). Residues 24 to 35 (QMQQYMMEMQRQ) are compositionally biased toward low complexity. Over residues 49-69 (EGYEEGQEGEGYGEEYGDQDY) the composition is skewed to acidic residues. Composition is skewed to basic and acidic residues over residues 89–103 (QVNE…RRVN), 386–411 (AHEE…KDYG), and 431–445 (ISDK…HAEQ). A compositionally biased stretch (low complexity) spans 446-456 (EQNQQAAQQQQ). 2 coiled-coil regions span residues 461-613 (NKEI…LRLR) and 638-775 (FEQL…ANQI). Over residues 774–787 (QISTQNMQSQNNSL) the composition is skewed to polar residues. Residues 774–794 (QISTQNMQSQNNSLKKPYQPY) form a disordered region.

The protein belongs to the CFAP184 family. Forms a complex with CFAP263; the interaction is required for functional activity in cilia.

The protein localises to the cell projection. Its subcellular location is the cilium. In terms of biological role, in complex with CFAP263, acts as a regulator of ciliary beating that connects radial spoke 3 (RS3) to the inner dynein arm (IDA) and the nexin-dynein regulatory complex (N-DRC). The complex is positioned parallel to N-DRC and forms a connection between the arch at the base of RS3, the IDA tail and N-DRC. In Tetrahymena thermophila (strain SB210), this protein is Cilia- and flagella-associated protein 184 (CFAP184).